Consider the following 515-residue polypeptide: UDP-glucosyltransferase 2 (515 aa).

The N-terminal stretch at 1-20 (MEFRLLILALFSVLMSTSNG) is a signal peptide. The Lumenal portion of the chain corresponds to 21 to 471 (AEILALFPIH…TAGAFLHWYQ (451 aa)). N-linked (GlcNAc...) asparagine glycans are attached at residues asparagine 51, asparagine 236, and asparagine 303. Residues 472 to 492 (YLLLDVITFLLVTFCAFCFIV) traverse the membrane as a helical segment. Topologically, residues 493–515 (KYICKALIHHYWSSSKSEKLKKN) are cytoplasmic.

This sequence belongs to the UDP-glycosyltransferase family. Post-translationally, glycosylated.

The protein localises to the endoplasmic reticulum membrane. It catalyses the reaction kermesate + UDP-alpha-D-glucose = carminate + UDP + 2 H(+). It carries out the reaction flavokermesate + UDP-alpha-D-glucose = flavokermesate 7-C-beta-D-glucoside + UDP + 2 H(+). In terms of biological role, membrane-bound UDP-glucosyltransferase (UGT) which catalyzes the C-glucosylation of kermesate and flavokermesate to produce carminate and flavokermesate 7-C-beta-D-glucoside (dcll) respectively. Carminate is used as a deterrent against insect predators. This is UDP-glucosyltransferase 2 from Dactylopius coccus (Cochineal).